A 463-amino-acid polypeptide reads, in one-letter code: Siroheme synthase 1 (463 aa).

Residues 1–203 are precorrin-2 dehydrogenase /sirohydrochlorin ferrochelatase; the sequence is MDFLPLFCQL…GQQQAAEESV (203 aa). Residues 22 to 23 and 43 to 44 each bind NAD(+); these read EV and PH. S128 carries the phosphoserine modification. A uroporphyrinogen-III C-methyltransferase region spans residues 215 to 463; it reads GSVTLVGAGP…YGEANTLAGV (249 aa). P224 is a binding site for S-adenosyl-L-methionine. The Proton acceptor role is filled by D247. The Proton donor role is filled by K269. S-adenosyl-L-methionine contacts are provided by residues 300 to 302, I305, 330 to 331, M382, and G411; these read GGD and TA.

The protein in the N-terminal section; belongs to the precorrin-2 dehydrogenase / sirohydrochlorin ferrochelatase family. It in the C-terminal section; belongs to the precorrin methyltransferase family.

It catalyses the reaction uroporphyrinogen III + 2 S-adenosyl-L-methionine = precorrin-2 + 2 S-adenosyl-L-homocysteine + H(+). The enzyme catalyses precorrin-2 + NAD(+) = sirohydrochlorin + NADH + 2 H(+). The catalysed reaction is siroheme + 2 H(+) = sirohydrochlorin + Fe(2+). Its pathway is cofactor biosynthesis; adenosylcobalamin biosynthesis; precorrin-2 from uroporphyrinogen III: step 1/1. It functions in the pathway cofactor biosynthesis; adenosylcobalamin biosynthesis; sirohydrochlorin from precorrin-2: step 1/1. The protein operates within porphyrin-containing compound metabolism; siroheme biosynthesis; precorrin-2 from uroporphyrinogen III: step 1/1. It participates in porphyrin-containing compound metabolism; siroheme biosynthesis; siroheme from sirohydrochlorin: step 1/1. Its pathway is porphyrin-containing compound metabolism; siroheme biosynthesis; sirohydrochlorin from precorrin-2: step 1/1. Functionally, multifunctional enzyme that catalyzes the SAM-dependent methylations of uroporphyrinogen III at position C-2 and C-7 to form precorrin-2 via precorrin-1. Then it catalyzes the NAD-dependent ring dehydrogenation of precorrin-2 to yield sirohydrochlorin. Finally, it catalyzes the ferrochelation of sirohydrochlorin to yield siroheme. The sequence is that of Siroheme synthase 1 from Aeromonas hydrophila subsp. hydrophila (strain ATCC 7966 / DSM 30187 / BCRC 13018 / CCUG 14551 / JCM 1027 / KCTC 2358 / NCIMB 9240 / NCTC 8049).